A 479-amino-acid chain; its full sequence is ATP synthase subunit beta (479 aa).

Position 153-160 (153-160 (GGAGVGKT)) interacts with ATP.

Belongs to the ATPase alpha/beta chains family. F-type ATPases have 2 components, CF(1) - the catalytic core - and CF(0) - the membrane proton channel. CF(1) has five subunits: alpha(3), beta(3), gamma(1), delta(1), epsilon(1). CF(0) has three main subunits: a(1), b(2) and c(9-12). The alpha and beta chains form an alternating ring which encloses part of the gamma chain. CF(1) is attached to CF(0) by a central stalk formed by the gamma and epsilon chains, while a peripheral stalk is formed by the delta and b chains.

The protein resides in the cell membrane. The catalysed reaction is ATP + H2O + 4 H(+)(in) = ADP + phosphate + 5 H(+)(out). In terms of biological role, produces ATP from ADP in the presence of a proton gradient across the membrane. The catalytic sites are hosted primarily by the beta subunits. The polypeptide is ATP synthase subunit beta (Lactobacillus delbrueckii subsp. bulgaricus (strain ATCC BAA-365 / Lb-18)).